Here is a 428-residue protein sequence, read N- to C-terminus: Gamma-glutamyl phosphate reductase (428 aa).

Belongs to the gamma-glutamyl phosphate reductase family.

It is found in the cytoplasm. The enzyme catalyses L-glutamate 5-semialdehyde + phosphate + NADP(+) = L-glutamyl 5-phosphate + NADPH + H(+). It functions in the pathway amino-acid biosynthesis; L-proline biosynthesis; L-glutamate 5-semialdehyde from L-glutamate: step 2/2. Catalyzes the NADPH-dependent reduction of L-glutamate 5-phosphate into L-glutamate 5-semialdehyde and phosphate. The product spontaneously undergoes cyclization to form 1-pyrroline-5-carboxylate. This chain is Gamma-glutamyl phosphate reductase, found in Zymomonas mobilis subsp. mobilis (strain ATCC 31821 / ZM4 / CP4).